Here is a 168-residue protein sequence, read N- to C-terminus: Small ribosomal subunit protein uS5 (168 aa).

The S5 DRBM domain maps to 17–80; the sequence is IEDQLVAVNR…EDGKKKMINV (64 aa).

This sequence belongs to the universal ribosomal protein uS5 family. Part of the 30S ribosomal subunit. Contacts proteins S4 and S8.

With S4 and S12 plays an important role in translational accuracy. In terms of biological role, located at the back of the 30S subunit body where it stabilizes the conformation of the head with respect to the body. The sequence is that of Small ribosomal subunit protein uS5 from Lactobacillus helveticus (strain DPC 4571).